A 516-amino-acid polypeptide reads, in one-letter code: Myocyte-specific enhancer factor 2A homolog (516 aa).

An interaction with hdac9 region spans residues 1–100 (MGRKKIQITR…KGLNGCESPD (100 aa)). Positions 3 to 57 (RKKIQITRIMDERNRQVTFTKRKFGLMKKAYELSVLCDCEIALIIFNSSNKLFQY) constitute an MADS-box domain. The mef2-type DNA-binding region spans 58–86 (ASTDMDKVLLKYTEYNEPHESRTNSDIVE). Residues 318-339 (PSSKGMMPPLNTQRVTSSQGTQ) form a disordered region. A compositionally biased stretch (polar residues) spans 327–339 (LNTQRVTSSQGTQ). Threonine 343 is modified (phosphothreonine; by NLK). A Phosphoserine; by NLK modification is found at serine 386. A compositionally biased stretch (polar residues) spans 420-433 (GSNLSINTNQNINI). The tract at residues 420-516 (GSNLSINTNQ…KRMRMDAWVT (97 aa)) is disordered. Over residues 465 to 475 (DSLSSSSSSYD) the composition is skewed to low complexity. Basic and acidic residues-rich tracts occupy residues 476-486 (GSDREDVRNDF) and 497-516 (NNED…AWVT).

It belongs to the MEF2 family. In terms of assembly, interacts with hdac9 and nlk2. Restricted to the somitic mesoderm of early embryos. Expressed in the head region of neurula stage embryos and in body muscle (myotomes) of the tadpole. Expressed in all tissues examined in the adult.

It is found in the nucleus. Its function is as follows. May regulate muscle-specific transcription in the embryo and may regulate transcription of a variety of cell types in the adult. Binds to the sequence 5'-CTA[TA]4TAR-3'. Acts downstream of nlk2 in anterior neural development, including eye formation. The chain is Myocyte-specific enhancer factor 2A homolog (mef2a) from Xenopus laevis (African clawed frog).